Consider the following 460-residue polypeptide: Bifunctional protein GlmU (460 aa).

Residues 1 to 232 form a pyrophosphorylase region; that stretch reads MENVAAIILA…SDEIMGVNDR (232 aa). UDP-N-acetyl-alpha-D-glucosamine is bound by residues 9–12, Lys23, Gln75, and 80–81; these read LAAG and GT. Mg(2+) is bound at residue Asp105. The UDP-N-acetyl-alpha-D-glucosamine site is built by Gly142, Glu157, Asn172, and Asn230. Asn230 is a Mg(2+) binding site. A linker region spans residues 233–253; sequence AQLAQAARILRRRINRDLMLS. The N-acetyltransferase stretch occupies residues 254–460; the sequence is GVSLVDPEQT…GWRIRMKKKT (207 aa). The UDP-N-acetyl-alpha-D-glucosamine site is built by Arg336 and Lys354. The active-site Proton acceptor is His366. UDP-N-acetyl-alpha-D-glucosamine contacts are provided by Tyr369 and Asn380. Residues 389–390, Ser408, Ala426, and Arg443 each bind acetyl-CoA; that span reads NY.

This sequence in the N-terminal section; belongs to the N-acetylglucosamine-1-phosphate uridyltransferase family. It in the C-terminal section; belongs to the transferase hexapeptide repeat family. As to quaternary structure, homotrimer. It depends on Mg(2+) as a cofactor.

It is found in the cytoplasm. The catalysed reaction is alpha-D-glucosamine 1-phosphate + acetyl-CoA = N-acetyl-alpha-D-glucosamine 1-phosphate + CoA + H(+). It carries out the reaction N-acetyl-alpha-D-glucosamine 1-phosphate + UTP + H(+) = UDP-N-acetyl-alpha-D-glucosamine + diphosphate. It participates in nucleotide-sugar biosynthesis; UDP-N-acetyl-alpha-D-glucosamine biosynthesis; N-acetyl-alpha-D-glucosamine 1-phosphate from alpha-D-glucosamine 6-phosphate (route II): step 2/2. The protein operates within nucleotide-sugar biosynthesis; UDP-N-acetyl-alpha-D-glucosamine biosynthesis; UDP-N-acetyl-alpha-D-glucosamine from N-acetyl-alpha-D-glucosamine 1-phosphate: step 1/1. It functions in the pathway bacterial outer membrane biogenesis; LPS lipid A biosynthesis. Catalyzes the last two sequential reactions in the de novo biosynthetic pathway for UDP-N-acetylglucosamine (UDP-GlcNAc). The C-terminal domain catalyzes the transfer of acetyl group from acetyl coenzyme A to glucosamine-1-phosphate (GlcN-1-P) to produce N-acetylglucosamine-1-phosphate (GlcNAc-1-P), which is converted into UDP-GlcNAc by the transfer of uridine 5-monophosphate (from uridine 5-triphosphate), a reaction catalyzed by the N-terminal domain. This Pelobacter propionicus (strain DSM 2379 / NBRC 103807 / OttBd1) protein is Bifunctional protein GlmU.